The chain runs to 728 residues: NF-kappa-B inhibitor zeta (728 aa).

A disordered region spans residues glycine 45–arginine 107. The span at serine 53–glutamate 82 shows a compositional bias: low complexity. Residues serine 83–valine 96 show a composition bias toward basic and acidic residues. An OCA domain is found at arginine 107–asparagine 129. A Nuclear localization signal motif is present at residues lysine 163–arginine 178. Composition is skewed to polar residues over residues proline 241–aspartate 250 and glutamine 268–serine 288. Residues proline 241–leucine 334 are disordered. The segment covering glutamine 303–proline 315 has biased composition (low complexity). Residues leucine 316–tyrosine 330 show a composition bias toward polar residues. Residues lysine 329–serine 403 form a required for transcriptional activity region. The tract at residues methionine 414 to tyrosine 728 is interaction with NFKB1/p50. ANK repeat units lie at residues aspartate 453–methionine 482, asparagine 489–threonine 518, tryptophan 522–glutamine 551, aspartate 561–proline 589, valine 591–alanine 617, serine 622–phenylalanine 651, and asparagine 658–threonine 691.

In terms of assembly, interacts with NFKB1/p50. Interacts with RELA. Interacts with AKIRIN2. As to expression, expressed in kidney, liver, lung and heart. Expressed at very low levels in skeletal muscle, spleen and brain.

It is found in the nucleus. Involved in regulation of NF-kappa-B transcription factor complexes. Inhibits NF-kappa-B activity without affecting its nuclear translocation upon stimulation. Inhibits DNA-binding of RELA and NFKB1/p50, and of the NF-kappa-B p65-p50 heterodimer and the NF-kappa-B p50-p50 homodimer. Also seems to activate NF-kappa-B-mediated transcription. In vitro, upon association with NFKB1/p50 has transcriptional activation activity and, together with NFKB1/p50 and RELA, is recruited to LCN2 promoters. Promotes transcription of LCN2 and DEFB4. Is recruited to IL-6 promoters and activates IL-6 but decreases TNF-alpha production in response to LPS. Seems to be involved in the induction of inflammatory genes activated through TLR/IL-1 receptor signaling. Involved in the induction of T helper 17 cells (Th17) differentiation upon recognition of antigen by T cell antigen receptor (TCR). This is NF-kappa-B inhibitor zeta (Nfkbiz) from Mus musculus (Mouse).